We begin with the raw amino-acid sequence, 462 residues long: Fasciclin-like arabinogalactan protein 18 (462 aa).

A signal peptide spans 1–25 (MDRCIYGCSVITIFFSFFFLLNASA). 3 N-linked (GlcNAc...) asparagine glycosylation sites follow: asparagine 32, asparagine 77, and asparagine 293. FAS1 domains lie at 40 to 185 (NSNS…ERLL) and 271 to 414 (VKDF…DGVL).

Belongs to the fasciclin-like AGP family.

It is found in the secreted. Its function is as follows. May be a cell surface adhesion protein. The chain is Fasciclin-like arabinogalactan protein 18 (FLA18) from Arabidopsis thaliana (Mouse-ear cress).